Consider the following 342-residue polypeptide: Metalloendoproteinase 4-MMP (342 aa).

An N-terminal signal peptide occupies residues 1–34 (MHHHHHPCNRKPFTTIFSFFLLYLNLHNQQIIEA). Positions 35 to 124 (RNPSQFTTNP…KTAPFHTGKK (90 aa)) are cleaved as a propeptide — activation peptide. The Cysteine switch motif lies at 104 to 111 (PRCGFPDD). Residues Cys106 and His252 each contribute to the Zn(2+) site. Glu253 is a catalytic residue. Zn(2+) contacts are provided by His256 and His262. Residue Asn300 is glycosylated (N-linked (GlcNAc...) asparagine). The GPI-anchor amidated aspartate moiety is linked to residue Asp317. Positions 318–342 (GSRIRSQGMIYSTLSTVIALCFLNW) are cleaved as a propeptide — removed in mature form.

It belongs to the peptidase M10A family. Matrix metalloproteinases (MMPs) subfamily. Zn(2+) is required as a cofactor. In terms of tissue distribution, mostly expressed in flowers and stems, and, to a lower extent, in leaves and roots.

It localises to the cell membrane. Its activity is regulated as follows. Repressed by acetohydroxamic acid (AHA). Its function is as follows. Matrix metalloproteinases (MMPs) or matrixins may play a role in the degradation and remodeling of the extracellular matrix (ECM) during development or in response to stresses. Active on myelin basic protein (MBP) and, to some extent, on McaPLGLDpaAR-NH(2) (QF24) and beta-casein. The sequence is that of Metalloendoproteinase 4-MMP from Arabidopsis thaliana (Mouse-ear cress).